Reading from the N-terminus, the 424-residue chain is Glycerol-3-phosphate dehydrogenase [NAD(+)] (424 aa).

NAD(+) contacts are provided by residues 79-84 (GSGNWG), F111, and F167. K190 serves as a coordination point for substrate. A223 contributes to the NAD(+) binding site. K283 acts as the Proton acceptor in catalysis. The NAD(+) site is built by R348 and Q377. Position 348-349 (348-349 (RN)) interacts with substrate.

It belongs to the NAD-dependent glycerol-3-phosphate dehydrogenase family.

The enzyme catalyses sn-glycerol 3-phosphate + NAD(+) = dihydroxyacetone phosphate + NADH + H(+). The polypeptide is Glycerol-3-phosphate dehydrogenase [NAD(+)] (GPD) (Eremothecium gossypii (strain ATCC 10895 / CBS 109.51 / FGSC 9923 / NRRL Y-1056) (Yeast)).